The primary structure comprises 298 residues: N-acetylmuramic acid 6-phosphate etherase (298 aa).

The SIS domain maps to 55 to 218 (IHTQVSGGGR…STGLMIKSGK (164 aa)). Glutamate 83 functions as the Proton donor in the catalytic mechanism. The active site involves glutamate 114.

It belongs to the GCKR-like family. MurNAc-6-P etherase subfamily. As to quaternary structure, homodimer.

It carries out the reaction N-acetyl-D-muramate 6-phosphate + H2O = N-acetyl-D-glucosamine 6-phosphate + (R)-lactate. Its pathway is amino-sugar metabolism; 1,6-anhydro-N-acetylmuramate degradation. It participates in amino-sugar metabolism; N-acetylmuramate degradation. The protein operates within cell wall biogenesis; peptidoglycan recycling. Specifically catalyzes the cleavage of the D-lactyl ether substituent of MurNAc 6-phosphate, producing GlcNAc 6-phosphate and D-lactate. Together with AnmK, is also required for the utilization of anhydro-N-acetylmuramic acid (anhMurNAc) either imported from the medium or derived from its own cell wall murein, and thus plays a role in cell wall recycling. This Escherichia coli O127:H6 (strain E2348/69 / EPEC) protein is N-acetylmuramic acid 6-phosphate etherase.